A 62-amino-acid chain; its full sequence is Enterocin E-760 (62 aa).

It is found in the secreted. Functionally, bacteriocin active against the Gram-negative bacteria S.enteritidis, S.choleraesuis, S.typhimurium, S.gallinarum, E.coli O157:H7, Y.enterocolitica, C.freundii, K.pneumoniae, S.dysentriae, P.aeruginosa, P.mirabilis, M.morganii, C.jejuni and 20 other Campylobacter isolates, and the Gram-positive bacteria S.aureus, S.epidermidis and L.monocytogenes. The sequence is that of Enterocin E-760 from Enterococcus sp.